A 118-amino-acid polypeptide reads, in one-letter code: V-type proton ATPase subunit G 1 (118 aa).

Ala2 carries the post-translational modification N-acetylalanine.

The protein belongs to the V-ATPase G subunit family. As to quaternary structure, V-ATPase is a heteromultimeric enzyme made up of two complexes: the ATP-hydrolytic V1 complex and the proton translocation V0 complex. The V1 complex consists of three catalytic AB heterodimers that form a heterohexamer, three peripheral stalks each consisting of EG heterodimers, one central rotor including subunits D and F, and the regulatory subunits C and H. The proton translocation complex V0 consists of the proton transport subunit a, a ring of proteolipid subunits c9c'', rotary subunit d, subunits e and f, and the accessory subunits ATP6AP1/Ac45 and ATP6AP2/PRR. Kidney; localizes to early distal nephron, encompassing thick ascending limbs and distal convoluted tubules (at protein level). Ubiquitous.

Its subcellular location is the apical cell membrane. In terms of biological role, subunit of the V1 complex of vacuolar(H+)-ATPase (V-ATPase), a multisubunit enzyme composed of a peripheral complex (V1) that hydrolyzes ATP and a membrane integral complex (V0) that translocates protons. V-ATPase is responsible for acidifying and maintaining the pH of intracellular compartments and in some cell types, is targeted to the plasma membrane, where it is responsible for acidifying the extracellular environment. In aerobic conditions, involved in intracellular iron homeostasis, thus triggering the activity of Fe(2+) prolyl hydroxylase (PHD) enzymes, and leading to HIF1A hydroxylation and subsequent proteasomal degradation. The protein is V-type proton ATPase subunit G 1 (ATP6V1G1) of Homo sapiens (Human).